A 236-amino-acid polypeptide reads, in one-letter code: UPF0257 lipoprotein YnfC (236 aa).

The N-terminal stretch at 1–16 (MKKPLLLTLLCMILAG) is a signal peptide. Cysteine 17 carries N-palmitoyl cysteine lipidation. The S-diacylglycerol cysteine moiety is linked to residue cysteine 17.

This sequence belongs to the UPF0257 family.

The protein resides in the cell membrane. This Salmonella schwarzengrund (strain CVM19633) protein is UPF0257 lipoprotein YnfC.